Here is a 694-residue protein sequence, read N- to C-terminus: MTDGNLSTSMNGVALMGILDGRQGDSLQDLQHLSIKAAPRSLSVPEYGPSLKLGALEDRHSLQSVDSGIPTLEIGNPEPVPCSVVHVKRKQSESEIVPERAFQSACPLPSCTPSAPTCSEREQVVRKSSTFPRTGYDSVKLYSPTSKALSRSDNVSVCSVSSLGTELSTTLSVSNEDILDLMVTSNSSAIVTLENDDDPQFTDVTLSSINETSDLHQQDCVAETEEGRKLKLLHPFSHFFTRNLLARKQNARLDRQRDLGWKLFGKVPLRETAQKDSKKTQKEYEDKAGRPSRPPSPKQNVRKNLDFEPLSTTALILEDRPANLPAKPAEEAQKHRQQYEEMVLQAKKRELKEAQRRRKQLEERCKVEESIGNAVLTWNNEILPNWETMWCSKKVRDLWWQGIPPSVRGKVWSLAIGNELNITHELFDICLARAKERWRSLSTGGSEVENEDAGFSAADREASLELIKLDISRTFPNLCIFQQGGPYHDMLHSILGAYTCYRPDVGYVQGMSFIAAVLILNLDTADAFIAFSNLLNKPCQMAFFRVDHGLMLTYFAAFEVFFEENLPKLFAHFKKNNLTADIYLIDWIFTLYSKSLPLDLACRIWDVFCRDGEEFLFRTALGILKLFEDILTRMDFIHSAQFLTRLPEDLPADEVFAAISTVQMQSRNKKWAQVLSALQKDSREMEKGSPSLRH.

Phosphoserine is present on serine 92. Residues 272–289 (TAQKDSKKTQKEYEDKAG) are compositionally biased toward basic and acidic residues. The segment at 272 to 305 (TAQKDSKKTQKEYEDKAGRPSRPPSPKQNVRKNL) is disordered. Serine 296 bears the Phosphoserine mark. The Rab-GAP TBC domain maps to 402-612 (GIPPSVRGKV…RIWDVFCRDG (211 aa)).

In terms of assembly, interacts with ULK1. May interact with RAB11A and RAB11B, but does not exhibit any GTPase-activating activity toward these proteins. Interacts with TRAPPC8.

The protein localises to the golgi apparatus. It localises to the cis-Golgi network. It is found in the trans-Golgi network. Functionally, plays a role in the regulation of starvation-induced autophagosome formation. Together with the TRAPPIII complex, regulates a constitutive trafficking step from peripheral recycling endosomes to the early Golgi, maintaining the cycling pool of ATG9 required for initiation of autophagy. This Mus musculus (Mouse) protein is TBC1 domain family member 14 (Tbc1d14).